Consider the following 156-residue polypeptide: Endoribonuclease YbeY (156 aa).

Positions 122, 126, and 132 each coordinate Zn(2+).

The protein belongs to the endoribonuclease YbeY family. It depends on Zn(2+) as a cofactor.

It localises to the cytoplasm. Its function is as follows. Single strand-specific metallo-endoribonuclease involved in late-stage 70S ribosome quality control and in maturation of the 3' terminus of the 16S rRNA. This chain is Endoribonuclease YbeY, found in Syntrophomonas wolfei subsp. wolfei (strain DSM 2245B / Goettingen).